A 470-amino-acid polypeptide reads, in one-letter code: Type II NADH:quinone oxidoreductase NdhA (470 aa).

FAD is bound by residues 21-25 and Val-89; that span reads GSGFG. The active site involves Glu-184. FAD contacts are provided by residues Asp-323 and 334–335; that span reads AQ. The chain crosses the membrane as a helical span at residues 389 to 409; the sequence is FAGYFAWLAWLVLHLVYLVGY.

Belongs to the NADH dehydrogenase family. FAD is required as a cofactor.

Its subcellular location is the cell inner membrane. It carries out the reaction a quinone + NADH + H(+) = a quinol + NAD(+). The enzyme catalyses a menaquinone + NADH + H(+) = a menaquinol + NAD(+). Inhibited by phenothiazine analogs. Functionally, alternative, nonproton pumping NADH:quinone oxidoreductase that delivers electrons to the respiratory chain by oxidation of NADH and reduction of quinones. The polypeptide is Type II NADH:quinone oxidoreductase NdhA (Mycobacterium tuberculosis (strain ATCC 25618 / H37Rv)).